Here is a 306-residue protein sequence, read N- to C-terminus: Porphobilinogen deaminase (306 aa).

Cysteine 237 carries the S-(dipyrrolylmethanemethyl)cysteine modification.

This sequence belongs to the HMBS family. Monomer. The cofactor is dipyrromethane.

It carries out the reaction 4 porphobilinogen + H2O = hydroxymethylbilane + 4 NH4(+). It functions in the pathway porphyrin-containing compound metabolism; protoporphyrin-IX biosynthesis; coproporphyrinogen-III from 5-aminolevulinate: step 2/4. Its function is as follows. Tetrapolymerization of the monopyrrole PBG into the hydroxymethylbilane pre-uroporphyrinogen in several discrete steps. The protein is Porphobilinogen deaminase of Syntrophus aciditrophicus (strain SB).